The chain runs to 239 residues: BURP domain-containing protein 6 (239 aa).

Residues 1–19 (MPGAIRDLINPVSSAASAS) form the signal peptide. The BURP domain occupies 28–239 (FFLEKDLFPG…PQDDMLWVRN (212 aa)).

Expressed in leaves and shoot.

The sequence is that of BURP domain-containing protein 6 (BURP6) from Oryza sativa subsp. japonica (Rice).